Consider the following 458-residue polypeptide: tRNA modification GTPase MnmE (458 aa).

Arg26, Glu88, and Arg127 together coordinate (6S)-5-formyl-5,6,7,8-tetrahydrofolate. Positions 224–378 (GLSTAIIGRP…IEDRINQLFF (155 aa)) constitute a TrmE-type G domain. Position 234 (Asn234) interacts with K(+). Residues 234–239 (NVGKSS), 253–259 (TDIAGTT), and 278–281 (DTAG) contribute to the GTP site. Residue Ser238 coordinates Mg(2+). Residues Thr253, Ile255, and Thr258 each coordinate K(+). Residue Thr259 coordinates Mg(2+). Lys458 serves as a coordination point for (6S)-5-formyl-5,6,7,8-tetrahydrofolate.

This sequence belongs to the TRAFAC class TrmE-Era-EngA-EngB-Septin-like GTPase superfamily. TrmE GTPase family. Homodimer. Heterotetramer of two MnmE and two MnmG subunits. K(+) serves as cofactor.

It is found in the cytoplasm. In terms of biological role, exhibits a very high intrinsic GTPase hydrolysis rate. Involved in the addition of a carboxymethylaminomethyl (cmnm) group at the wobble position (U34) of certain tRNAs, forming tRNA-cmnm(5)s(2)U34. This is tRNA modification GTPase MnmE from Streptococcus pyogenes serotype M12 (strain MGAS9429).